Here is a 215-residue protein sequence, read N- to C-terminus: Chymomexicain (215 aa).

Cystine bridges form between cysteine 22–cysteine 63, cysteine 56–cysteine 96, and cysteine 154–cysteine 201. The active site involves cysteine 25. Active-site residues include histidine 160 and asparagine 176.

It belongs to the peptidase C1 family.

Functionally, cysteine protease. The chain is Chymomexicain from Jacaratia mexicana (Wild papaya).